We begin with the raw amino-acid sequence, 640 residues long: MDGFEFFSGRSDVVAMICDDRLLDLSESIPSGKVPEPIELDSPHGLDILRHSCAHVLAQAVQSIYGDAKLGIGPFTENGFYYDFSVNEPFSSDSLRVIEDKMREIVHSDQKFVRKVVDRQSAHSQFRDEPFKLEIINATDDTLSIYYNIDADSGSVRWMDFCRGPHLPSTRFIGDAFALTHVSSVYWRGNSDNPQMQRVYGTAWGSAKDLKGYLDRVELAKLVDHRKLGKELDLFSLPDEIGPGLALFHVKGGIIRSEMEQYARLRHLEEGYNFVYSPHITKRDLFERSGHLQWYGQSMFPPMRLDKDSCSQGFDYYLKPMNCPFHSLVFSSQPRSYRQLPLRLAEFGTVYRYEQSGAIHGLARVRGLTQDDAHIYATRESFEDEVSKALQFTISLLGDYGLDQFYIEISTRDASGKFLGSDEDWAYATHILQKVAQDSGLQTRDDPGGAAFYGPKISVQAKDAIGRYWQMSTIQLDFNLPERFGLFYTDRAGERKRPIMVHRALFGSFERFFAVLTEHYAGAFPPWLSPEQVVALPVTSAHIPYLEEFVSRFSSRLIRARVDYMQDRLPKKIRSYVKEKIPFVLVAGDRDLTNRTVAIRFRDGTQISDLPIQKCFDGICASIDRKKQIQTRIDFDSVLE.

Residues 224-525 are catalytic; that stretch reads DHRKLGKELD…LTEHYAGAFP (302 aa). Residues Cys-323, His-374, and His-502 each contribute to the Zn(2+) site.

This sequence belongs to the class-II aminoacyl-tRNA synthetase family. Homodimer. Requires Zn(2+) as cofactor.

The protein localises to the cytoplasm. It carries out the reaction tRNA(Thr) + L-threonine + ATP = L-threonyl-tRNA(Thr) + AMP + diphosphate + H(+). Functionally, catalyzes the attachment of threonine to tRNA(Thr) in a two-step reaction: L-threonine is first activated by ATP to form Thr-AMP and then transferred to the acceptor end of tRNA(Thr). Also edits incorrectly charged L-seryl-tRNA(Thr). In Tropheryma whipplei (strain Twist) (Whipple's bacillus), this protein is Threonine--tRNA ligase.